The following is a 662-amino-acid chain: Biosynthetic arginine decarboxylase (662 aa).

N6-(pyridoxal phosphate)lysine is present on Lys-127. 307–317 (FDVGGGLGVDY) contacts substrate.

It belongs to the Orn/Lys/Arg decarboxylase class-II family. SpeA subfamily. In terms of assembly, homotetramer. Requires Mg(2+) as cofactor. It depends on pyridoxal 5'-phosphate as a cofactor.

It is found in the periplasm. The catalysed reaction is L-arginine + H(+) = agmatine + CO2. It functions in the pathway amine and polyamine biosynthesis; agmatine biosynthesis; agmatine from L-arginine: step 1/1. In terms of biological role, catalyzes the biosynthesis of agmatine from arginine. The polypeptide is Biosynthetic arginine decarboxylase (Shigella flexneri).